Consider the following 293-residue polypeptide: Protease HtpX homolog (293 aa).

The next 2 membrane-spanning stretches (helical) occupy residues 6–26 (VAVM…LIGG) and 28–48 (SGMV…YWNS). Histidine 130 contributes to the Zn(2+) binding site. Glutamate 131 is a catalytic residue. Residue histidine 134 participates in Zn(2+) binding. Transmembrane regions (helical) follow at residues 145-165 (LTAT…FFGG) and 172-192 (PLGA…AMMV). Glutamate 201 lines the Zn(2+) pocket.

The protein belongs to the peptidase M48B family. The cofactor is Zn(2+).

The protein resides in the cell inner membrane. The sequence is that of Protease HtpX homolog from Rhodospirillum rubrum (strain ATCC 11170 / ATH 1.1.1 / DSM 467 / LMG 4362 / NCIMB 8255 / S1).